The primary structure comprises 81 residues: Photosystem I iron-sulfur center (81 aa).

4Fe-4S ferredoxin-type domains lie at Ser-2–Trp-31 and Ile-39–Tyr-68. Residues Cys-11, Cys-14, Cys-17, Cys-21, Cys-48, Cys-51, Cys-54, and Cys-58 each coordinate [4Fe-4S] cluster.

As to quaternary structure, the eukaryotic PSI reaction center is composed of at least 11 subunits. The cofactor is [4Fe-4S] cluster.

It localises to the plastid. The protein localises to the chloroplast thylakoid membrane. The catalysed reaction is reduced [plastocyanin] + hnu + oxidized [2Fe-2S]-[ferredoxin] = oxidized [plastocyanin] + reduced [2Fe-2S]-[ferredoxin]. Its function is as follows. Apoprotein for the two 4Fe-4S centers FA and FB of photosystem I (PSI); essential for photochemical activity. FB is the terminal electron acceptor of PSI, donating electrons to ferredoxin. The C-terminus interacts with PsaA/B/D and helps assemble the protein into the PSI complex. Required for binding of PsaD and PsaE to PSI. PSI is a plastocyanin/cytochrome c6-ferredoxin oxidoreductase, converting photonic excitation into a charge separation, which transfers an electron from the donor P700 chlorophyll pair to the spectroscopically characterized acceptors A0, A1, FX, FA and FB in turn. This is Photosystem I iron-sulfur center from Nephroselmis olivacea (Green alga).